A 544-amino-acid chain; its full sequence is MSQSPTNVPRSYNSVLDLKLASPTNSASGATGGWIVQKFGGTSVGKFPENIVDNIVKVYSQTNRVAVVCSARSSQTKSEGTTSRLLRSADLAENDKDYQPLLNAIEEDHVTNAERIQSEEIKQELIKDTKQEIEHVRELLHACQIIGEISPRSLDSIMAVGEKLSCLFMTALMKDHGLNAVYINLQDVIPLSYDFQKGFDDSFYQFLSQEIGKRVLQCDKEREGEEDVIPVLTGYFGVVPGGLLNGVGRGYTDLCAALAAVALQADELQIWKEVDGIFTADPRKVPNARLLDSVTPEEAAELTYYGSEVIHPFTMEQVIRAKIPIRIKNVENPTGKGTIIYPDNIGRRGEATPPHPPAAFEQLAMSSLLQRKRSATAITAKQDIVVINIHSNKKTLSHGFLAHVFTTLDKYKLVVDLISTSEVHVSMALSIQSDQESQLKHALVDLRKMGTVDVTKKMTIVSLVGKQMVNFIGIAGNMFKVLADEKINIEMISQGANEINISAVINEKDTIRALKSIHAKLLEGGSAIGDSSAVDTRLEALKLS.

In terms of domain architecture, ACT spans 463 to 535; it reads LVGKQMVNFI…SAIGDSSAVD (73 aa).

The protein belongs to the aspartokinase family.

The enzyme catalyses L-aspartate + ATP = 4-phospho-L-aspartate + ADP. It participates in amino-acid biosynthesis; L-methionine biosynthesis via de novo pathway; L-homoserine from L-aspartate: step 1/3. The protein operates within amino-acid biosynthesis; L-threonine biosynthesis; L-threonine from L-aspartate: step 1/5. Phosphorylates aspartate, the first step in the biosynthesis of amino acids that derive from aspartate (the aspartate family of amino acids), including methioinine and threonine, the latter of which is a precursor to isoleucine. The polypeptide is Aspartokinase (Candida albicans (strain SC5314 / ATCC MYA-2876) (Yeast)).